A 2357-amino-acid chain; its full sequence is Protein transport protein Sec16A (2357 aa).

11 disordered regions span residues 1–225 (MQPP…SYQH), 240–347 (QAAS…AHHP), 394–463 (SFSS…GTGT), 504–562 (YGPL…ARPQ), 579–630 (DTSG…TSAN), 666–689 (KRRA…DNME), 714–739 (TAGT…GPVK), 778–820 (SEVV…PPKV), 917–1008 (VTGA…QEEA), 1023–1055 (PVRM…LHNQ), and 1076–1151 (QPEL…AAVR). Composition is skewed to polar residues over residues 57–75 (NRQT…SSLP) and 94–104 (TPTNAGDSSTG). Low complexity predominate over residues 208 to 221 (MPGQWGPAQGGPQP). The span at 281–290 (VHQQSKNHPL) shows a compositional bias: polar residues. Serine 311 bears the Phosphoserine mark. Polar residues predominate over residues 333–342 (PFTQGNSPEN). Positions 540–561 (PDSVSSSYSSHSHRSPPGSARP) are enriched in low complexity. Phosphoserine occurs at positions 581, 591, 609, 611, and 614. The segment covering 581 to 590 (SGSFFKQIDS) has biased composition (polar residues). Threonine 615 is modified (phosphothreonine). The residue at position 617 (serine 617) is a Phosphoserine. Polar residues-rich tracts occupy residues 921–959 (SLPS…QTPQ), 972–997 (FVSS…PNSN), and 1029–1041 (PSPS…QQPL). The tract at residues 1037–1905 (SQQPLPNHPR…QHVERQIQEG (869 aa)) is required for localization to endoplasmic reticulum exit sites. Serine 1087 is subject to Phosphoserine. An interaction with MIA3 region spans residues 1118-1415 (ASPASVNTGQ…EAPHAPGSFH (298 aa)). The segment at 1119-1420 (SPASVNTGQL…PGSFHGDYAY (302 aa)) is required for endoplasmic reticulum localization. Low complexity predominate over residues 1134-1150 (QASSASVTSTNSSQAAV). Serine 1223 carries the post-translational modification Phosphoserine. The segment at 1226–1253 (AENHRYSEPERPSSRASHYSDQLAPRQG) is disordered. Residues 1227-1238 (ENHRYSEPERPS) are compositionally biased toward basic and acidic residues. Serine 1245 carries the phosphoserine modification. The residue at position 1340 (threonine 1340) is a Phosphothreonine. Phosphoserine occurs at positions 1342, 1362, 1365, 1371, 1374, 1377, 1384, 1588, and 1616. A disordered region spans residues 1344-1395 (DDDAEIHRDPYGEEADRRSIHSEHSARSLRSTHSLPSRRSSLSSHSHQSQIY). Positions 1348–1369 (EIHRDPYGEEADRRSIHSEHSA) are enriched in basic and acidic residues. Residues 1371-1392 (SLRSTHSLPSRRSSLSSHSHQS) are compositionally biased toward low complexity. The tract at residues 1449–1905 (QVPSRPTSPE…QHVERQIQEG (457 aa)) is central conserved domain (CCD); mediates interaction with RNF183, LRRK2 and SEC13. The segment at 1907-1943 (VLWSQDGTEPQQCRITSGSEVEQSDGPGLNQQAGPQA) is disordered. The segment covering 1908-1927 (LWSQDGTEPQQCRITSGSEV) has biased composition (polar residues). A Phosphothreonine modification is found at threonine 1922. Residues serine 1951, serine 2043, serine 2063, serine 2077, and serine 2094 each carry the phosphoserine modification. Disordered regions lie at residues 1993–2141 (ELSP…RTEA), 2156–2198 (KKNQ…PTAS), and 2240–2357 (PLPI…AALN). Residues 2092-2105 (GSSSLTRAPSLTSD) are compositionally biased toward polar residues. Residues 2106 to 2126 (SEGKKPAQAVKKEPKEPKKTE) are compositionally biased toward basic and acidic residues. Residues 2126–2357 (ESWFSRWLPG…IGQRKYAALN (232 aa)) are required for interaction with SEC23A. A Phosphoserine modification is found at serine 2291. The segment covering 2332 to 2343 (QLVQASVTSGNS) has biased composition (polar residues).

The protein belongs to the SEC16 family. As to quaternary structure, SEC16A and SEC16B are each present in multiple copies in a heteromeric complex. Interacts with SEC23A. Interacts with RNF183, RNF152, MIA3 and SEC13. Interacts with GORASP2 in response to ER stress. Interacts with LRRK2 (via ROC domain). Interacts with RAB10.

It is found in the endoplasmic reticulum membrane. The protein resides in the golgi apparatus membrane. It localises to the cytoplasm. The protein localises to the perinuclear region. Its subcellular location is the cytosol. It is found in the microsome membrane. Acts as a molecular scaffold that plays a key role in the organization of the endoplasmic reticulum exit sites (ERES), also known as transitional endoplasmic reticulum (tER). SAR1A-GTP-dependent assembly of SEC16A on the ER membrane forms an organized scaffold defining an ERES. Required for secretory cargo traffic from the endoplasmic reticulum to the Golgi apparatus. Mediates the recruitment of MIA3/TANGO to ERES. Regulates both conventional (ER/Golgi-dependent) and GORASP2-mediated unconventional (ER/Golgi-independent) trafficking of CFTR to cell membrane. Acts as a RAB10 effector in the regulation of insulin-induced SLC2A4/GLUT4 glucose transporter-enriched vesicles delivery to the plasma membrane in adipocytes. This Mus musculus (Mouse) protein is Protein transport protein Sec16A (Sec16a).